Reading from the N-terminus, the 519-residue chain is Exodeoxyribonuclease 7 large subunit (519 aa).

The protein belongs to the XseA family. As to quaternary structure, heterooligomer composed of large and small subunits.

The protein resides in the cytoplasm. It catalyses the reaction Exonucleolytic cleavage in either 5'- to 3'- or 3'- to 5'-direction to yield nucleoside 5'-phosphates.. In terms of biological role, bidirectionally degrades single-stranded DNA into large acid-insoluble oligonucleotides, which are then degraded further into small acid-soluble oligonucleotides. The protein is Exodeoxyribonuclease 7 large subunit of Cereibacter sphaeroides (strain ATCC 17025 / ATH 2.4.3) (Rhodobacter sphaeroides).